The sequence spans 118 residues: Holo-[acyl-carrier-protein] synthase (118 aa).

Positions 8 and 58 each coordinate Mg(2+).

Belongs to the P-Pant transferase superfamily. AcpS family. Requires Mg(2+) as cofactor.

The protein resides in the cytoplasm. It carries out the reaction apo-[ACP] + CoA = holo-[ACP] + adenosine 3',5'-bisphosphate + H(+). Transfers the 4'-phosphopantetheine moiety from coenzyme A to a Ser of acyl-carrier-protein. The sequence is that of Holo-[acyl-carrier-protein] synthase from Streptococcus equi subsp. zooepidemicus (strain H70).